Here is a 384-residue protein sequence, read N- to C-terminus: Dual-specificity RNA methyltransferase RlmN (384 aa).

E105 acts as the Proton acceptor in catalysis. A Radical SAM core domain is found at 111–350; it reads EDDRATLCVS…TIVRKTRGDD (240 aa). C118 and C355 form a disulfide bridge. The [4Fe-4S] cluster site is built by C125, C129, and C132. S-adenosyl-L-methionine-binding positions include 179 to 180, S211, 233 to 235, and N312; these read GE and SLH. C355 serves as the catalytic S-methylcysteine intermediate.

Belongs to the radical SAM superfamily. RlmN family. [4Fe-4S] cluster serves as cofactor.

The protein resides in the cytoplasm. The catalysed reaction is adenosine(2503) in 23S rRNA + 2 reduced [2Fe-2S]-[ferredoxin] + 2 S-adenosyl-L-methionine = 2-methyladenosine(2503) in 23S rRNA + 5'-deoxyadenosine + L-methionine + 2 oxidized [2Fe-2S]-[ferredoxin] + S-adenosyl-L-homocysteine. The enzyme catalyses adenosine(37) in tRNA + 2 reduced [2Fe-2S]-[ferredoxin] + 2 S-adenosyl-L-methionine = 2-methyladenosine(37) in tRNA + 5'-deoxyadenosine + L-methionine + 2 oxidized [2Fe-2S]-[ferredoxin] + S-adenosyl-L-homocysteine. Its function is as follows. Specifically methylates position 2 of adenine 2503 in 23S rRNA and position 2 of adenine 37 in tRNAs. m2A2503 modification seems to play a crucial role in the proofreading step occurring at the peptidyl transferase center and thus would serve to optimize ribosomal fidelity. In Escherichia coli O157:H7, this protein is Dual-specificity RNA methyltransferase RlmN.